The following is a 477-amino-acid chain: Bifunctional protein HldE (477 aa).

The interval 1–318 (MKVTLPEFER…ENAVRGRAET (318 aa)) is ribokinase. 195 to 198 (NLSE) is a binding site for ATP. Aspartate 264 is a catalytic residue. The segment at 344–477 (MTNGVFDILH…IKKIQKDSDK (134 aa)) is cytidylyltransferase.

The protein in the N-terminal section; belongs to the carbohydrate kinase PfkB family. This sequence in the C-terminal section; belongs to the cytidylyltransferase family. In terms of assembly, homodimer.

It carries out the reaction D-glycero-beta-D-manno-heptose 7-phosphate + ATP = D-glycero-beta-D-manno-heptose 1,7-bisphosphate + ADP + H(+). It catalyses the reaction D-glycero-beta-D-manno-heptose 1-phosphate + ATP + H(+) = ADP-D-glycero-beta-D-manno-heptose + diphosphate. Its pathway is nucleotide-sugar biosynthesis; ADP-L-glycero-beta-D-manno-heptose biosynthesis; ADP-L-glycero-beta-D-manno-heptose from D-glycero-beta-D-manno-heptose 7-phosphate: step 1/4. It functions in the pathway nucleotide-sugar biosynthesis; ADP-L-glycero-beta-D-manno-heptose biosynthesis; ADP-L-glycero-beta-D-manno-heptose from D-glycero-beta-D-manno-heptose 7-phosphate: step 3/4. In terms of biological role, catalyzes the phosphorylation of D-glycero-D-manno-heptose 7-phosphate at the C-1 position to selectively form D-glycero-beta-D-manno-heptose-1,7-bisphosphate. Functionally, catalyzes the ADP transfer from ATP to D-glycero-beta-D-manno-heptose 1-phosphate, yielding ADP-D-glycero-beta-D-manno-heptose. The polypeptide is Bifunctional protein HldE (Klebsiella pneumoniae subsp. pneumoniae (strain ATCC 700721 / MGH 78578)).